Here is a 355-residue protein sequence, read N- to C-terminus: Protein RecA (355 aa).

67–74 (GPESSGKT) lines the ATP pocket.

The protein belongs to the RecA family.

It is found in the cytoplasm. In terms of biological role, can catalyze the hydrolysis of ATP in the presence of single-stranded DNA, the ATP-dependent uptake of single-stranded DNA by duplex DNA, and the ATP-dependent hybridization of homologous single-stranded DNAs. It interacts with LexA causing its activation and leading to its autocatalytic cleavage. This Shewanella amazonensis (strain ATCC BAA-1098 / SB2B) protein is Protein RecA.